The primary structure comprises 277 residues: Diaminopimelate epimerase (277 aa).

Positions 13, 46, and 65 each coordinate substrate. The active-site Proton donor is the Cys-74. Substrate is bound by residues 75 to 76 (GN), Asn-158, Asn-191, and 209 to 210 (ER). Cys-218 functions as the Proton acceptor in the catalytic mechanism. Residue 219–220 (GT) participates in substrate binding.

Belongs to the diaminopimelate epimerase family. As to quaternary structure, homodimer.

The protein resides in the cytoplasm. The enzyme catalyses (2S,6S)-2,6-diaminopimelate = meso-2,6-diaminopimelate. The protein operates within amino-acid biosynthesis; L-lysine biosynthesis via DAP pathway; DL-2,6-diaminopimelate from LL-2,6-diaminopimelate: step 1/1. Functionally, catalyzes the stereoinversion of LL-2,6-diaminopimelate (L,L-DAP) to meso-diaminopimelate (meso-DAP), a precursor of L-lysine and an essential component of the bacterial peptidoglycan. This chain is Diaminopimelate epimerase, found in Nitrosospira multiformis (strain ATCC 25196 / NCIMB 11849 / C 71).